The chain runs to 466 residues: Na(+)/H(+) antiporter NhaA (466 aa).

A run of 11 helical transmembrane segments spans residues 32–52 (VGGV…NVPA), 74–94 (LSVQ…VAGI), 111–131 (AALP…VYTL), 142–162 (GWAV…AVIG), 172–192 (FLLT…AVFF), 195–215 (DLNF…WLLL), 221–241 (GWYV…NSGI), 280–300 (GLAV…GGAL), 310–330 (LGVV…GTWL), 348–368 (VFAV…IGEL), and 379–399 (EVKA…TTLL).

The protein belongs to the NhaA Na(+)/H(+) (TC 2.A.33) antiporter family.

It localises to the cell membrane. It carries out the reaction Na(+)(in) + 2 H(+)(out) = Na(+)(out) + 2 H(+)(in). Its function is as follows. Na(+)/H(+) antiporter that extrudes sodium in exchange for external protons. This is Na(+)/H(+) antiporter NhaA from Streptomyces avermitilis (strain ATCC 31267 / DSM 46492 / JCM 5070 / NBRC 14893 / NCIMB 12804 / NRRL 8165 / MA-4680).